We begin with the raw amino-acid sequence, 237 residues long: Leucyl/phenylalanyl-tRNA--protein transferase (237 aa).

It belongs to the L/F-transferase family.

It is found in the cytoplasm. The catalysed reaction is N-terminal L-lysyl-[protein] + L-leucyl-tRNA(Leu) = N-terminal L-leucyl-L-lysyl-[protein] + tRNA(Leu) + H(+). It carries out the reaction N-terminal L-arginyl-[protein] + L-leucyl-tRNA(Leu) = N-terminal L-leucyl-L-arginyl-[protein] + tRNA(Leu) + H(+). It catalyses the reaction L-phenylalanyl-tRNA(Phe) + an N-terminal L-alpha-aminoacyl-[protein] = an N-terminal L-phenylalanyl-L-alpha-aminoacyl-[protein] + tRNA(Phe). Its function is as follows. Functions in the N-end rule pathway of protein degradation where it conjugates Leu, Phe and, less efficiently, Met from aminoacyl-tRNAs to the N-termini of proteins containing an N-terminal arginine or lysine. This is Leucyl/phenylalanyl-tRNA--protein transferase from Shewanella baltica (strain OS155 / ATCC BAA-1091).